The sequence spans 51 residues: Lantibiotic streptococcin A-M49 (51 aa).

A propeptide spanning residues 1-25 (MTKEHEIINSIQEVSLEELDQIIGA) is cleaved from the precursor. 2 consecutive cross-links (beta-methyllanthionine (Thr-Cys)) follow at residues 33-38 (TISHEC) and 42-50 (TWAFLATCC). The segment at residues 35 to 49 (SHECHLNTWAFLATC) is a cross-link (lanthionine (Ser-Cys)). T48 carries the post-translational modification 2,3-didehydrobutyrine.

The protein belongs to the type A lantibiotic family. Maturation of lantibiotics involves the enzymatic conversion of Thr, and Ser into dehydrated AA and the formation of thioether bonds with cysteine. This is followed by membrane translocation and cleavage of the modified precursor.

The protein localises to the secreted. It localises to the cell surface. Its function is as follows. Lanthionine-containing peptide antibiotic (lantibiotic) active on certain Gram-positive bacteria. The bactericidal activity of lantibiotics is based on depolarization of energized bacterial cytoplasmic membranes, initiated by the formation of aqueous transmembrane pores. The chain is Lantibiotic streptococcin A-M49 (scnA') from Streptococcus pyogenes serotype M49.